The chain runs to 194 residues: Probable GTP-binding protein EngB (194 aa).

An EngB-type G domain is found at 19–193 (DCIQICFWGR…VLFIEENIFK (175 aa)). GTP-binding positions include 27–34 (GRSNVGKS), 53–57 (GRTQF), 70–73 (DLPG), 137–140 (TKID), and 172–174 (VSS). 2 residues coordinate Mg(2+): S34 and T55.

It belongs to the TRAFAC class TrmE-Era-EngA-EngB-Septin-like GTPase superfamily. EngB GTPase family. Mg(2+) serves as cofactor.

Its function is as follows. Necessary for normal cell division and for the maintenance of normal septation. In Mycoplasmopsis agalactiae (strain NCTC 10123 / CIP 59.7 / PG2) (Mycoplasma agalactiae), this protein is Probable GTP-binding protein EngB.